Consider the following 90-residue polypeptide: Probable Fe(2+)-trafficking protein (90 aa).

Belongs to the Fe(2+)-trafficking protein family.

Functionally, could be a mediator in iron transactions between iron acquisition and iron-requiring processes, such as synthesis and/or repair of Fe-S clusters in biosynthetic enzymes. The polypeptide is Probable Fe(2+)-trafficking protein (Polynucleobacter asymbioticus (strain DSM 18221 / CIP 109841 / QLW-P1DMWA-1) (Polynucleobacter necessarius subsp. asymbioticus)).